The following is a 271-amino-acid chain: 39kDa core protein OPG130 (271 aa).

Disordered regions lie at residues 80-101 (PLQV…NTSS) and 140-180 (KDQK…TPPQ). A compositionally biased stretch (polar residues) spans 92–101 (PRQQQTNTSS). Low complexity predominate over residues 144–165 (TTTTPSTQPSQTLPTTTCTQQS).

It belongs to the orthopoxvirus OPG130 family. In terms of assembly, interacts with OPG136 and its cleaved form. In terms of processing, its phosphorylation state is regulated by the OPG054 kinase and the OPG106 phosphatase.

It localises to the virion. The protein resides in the host endoplasmic reticulum-Golgi intermediate compartment membrane. Component of the virion core. Participates in virion assembly. This Homo sapiens (Human) protein is 39kDa core protein OPG130 (OPG130).